We begin with the raw amino-acid sequence, 103 residues long: Large ribosomal subunit protein bL21 (103 aa).

It belongs to the bacterial ribosomal protein bL21 family. Part of the 50S ribosomal subunit. Contacts protein L20.

This protein binds to 23S rRNA in the presence of protein L20. The sequence is that of Large ribosomal subunit protein bL21 from Mycolicibacterium paratuberculosis (strain ATCC BAA-968 / K-10) (Mycobacterium paratuberculosis).